Reading from the N-terminus, the 226-residue chain is MDWGALQTILGGVNKHSTSIGKIWLTVLFIFRIMILVVAAKEVWGDEQADFVCNTLQPGCKNVCYDHYFPISHIRLWALQLIFVSTPALLVAMHVAYRRHEKKRKFIKGEIKSEFKDIEEIKTQKVRIEGSLWWTYTSSIFFRVIFEAAFMYVFYVMYDGFSMQRLVKCNAWPCPNTVDCFVSRPTEKTVFTVFMIAVSGICILLNVTELCYLLIRYCSGRSKKPV.

The stretch at 2–13 (DWGALQTILGGV) is an intramembrane region. Residues 14-20 (NKHSTSI) lie on the Cytoplasmic side of the membrane. Residues 21-40 (GKIWLTVLFIFRIMILVVAA) traverse the membrane as a helical segment. Residues 41–73 (KEVWGDEQADFVCNTLQPGCKNVCYDHYFPISH) are Extracellular-facing. Ca(2+)-binding residues include glutamate 42, glycine 45, and glutamate 47. 3 cysteine pairs are disulfide-bonded: cysteine 53/cysteine 180, cysteine 60/cysteine 174, and cysteine 64/cysteine 169. The chain crosses the membrane as a helical span at residues 74–94 (IRLWALQLIFVSTPALLVAMH). Over 95-135 (VAYRRHEKKRKFIKGEIKSEFKDIEEIKTQKVRIEGSLWWT) the chain is Cytoplasmic. The chain crosses the membrane as a helical span at residues 136–156 (YTSSIFFRVIFEAAFMYVFYV). The Extracellular segment spans residues 157–189 (MYDGFSMQRLVKCNAWPCPNTVDCFVSRPTEKT). A helical membrane pass occupies residues 190 to 210 (VFTVFMIAVSGICILLNVTEL). Residues 211–226 (CYLLIRYCSGRSKKPV) lie on the Cytoplasmic side of the membrane.

This sequence belongs to the connexin family. Beta-type (group I) subfamily. As to quaternary structure, a hemichannel or connexon is composed of a hexamer of connexins. A functional gap junction is formed by the apposition of two hemichannels. Forms heteromeric channels with GJB4. Interacts with CNST.

The protein localises to the cell membrane. Its subcellular location is the cell junction. It is found in the gap junction. Functionally, structural component of gap junctions. Gap junctions are dodecameric channels that connect the cytoplasm of adjoining cells. They are formed by the docking of two hexameric hemichannels, one from each cell membrane. Small molecules and ions diffuse from one cell to a neighboring cell via the central pore. The protein is Gap junction beta-2 protein (GJB2) of Pongo pygmaeus (Bornean orangutan).